Consider the following 159-residue polypeptide: Stress-induced protein 1 (159 aa).

The sHSP domain occupies asparagine 33–serine 141.

It belongs to the small heat shock protein (HSP20) family.

This is Stress-induced protein 1 from Caenorhabditis elegans.